Here is a 157-residue protein sequence, read N- to C-terminus: Ribonuclease H (157 aa).

The region spanning 5-146 (IMKQVEIFTD…CDDLARTAAE (142 aa)) is the RNase H type-1 domain. Mg(2+) contacts are provided by Asp-14, Glu-52, Asp-74, and Asp-138.

It belongs to the RNase H family. Monomer. Requires Mg(2+) as cofactor.

The protein resides in the cytoplasm. The catalysed reaction is Endonucleolytic cleavage to 5'-phosphomonoester.. Endonuclease that specifically degrades the RNA of RNA-DNA hybrids. The protein is Ribonuclease H of Aliivibrio salmonicida (strain LFI1238) (Vibrio salmonicida (strain LFI1238)).